The following is a 244-amino-acid chain: Glucosamine-6-phosphate deaminase (244 aa).

The active-site Proton acceptor; for enolization step is the D67. The active-site For ring-opening step is N136. The active-site Proton acceptor; for ring-opening step is H138. The active-site For ring-opening step is E143.

This sequence belongs to the glucosamine/galactosamine-6-phosphate isomerase family. NagB subfamily.

The enzyme catalyses alpha-D-glucosamine 6-phosphate + H2O = beta-D-fructose 6-phosphate + NH4(+). It functions in the pathway amino-sugar metabolism; N-acetylneuraminate degradation; D-fructose 6-phosphate from N-acetylneuraminate: step 5/5. Functionally, catalyzes the reversible isomerization-deamination of glucosamine 6-phosphate (GlcN6P) to form fructose 6-phosphate (Fru6P) and ammonium ion. The protein is Glucosamine-6-phosphate deaminase of Clostridium botulinum (strain ATCC 19397 / Type A).